Here is a 221-residue protein sequence, read N- to C-terminus: Phosphatidylethanolamine-binding protein homolog F40A3.3 (221 aa).

Belongs to the phosphatidylethanolamine-binding protein family.

The chain is Phosphatidylethanolamine-binding protein homolog F40A3.3 from Caenorhabditis elegans.